The sequence spans 292 residues: Small ribosomal subunit biogenesis GTPase RsgA (292 aa).

The CP-type G domain occupies 64–221 (RSELFRPAVA…LVDTPGFSSL (158 aa)). Residues 113–116 (NKMD) and 164–172 (GPSGVGKST) contribute to the GTP site. Residues cysteine 245, cysteine 250, histidine 252, and cysteine 258 each coordinate Zn(2+).

Belongs to the TRAFAC class YlqF/YawG GTPase family. RsgA subfamily. Monomer. Associates with 30S ribosomal subunit, binds 16S rRNA. Zn(2+) is required as a cofactor.

Its subcellular location is the cytoplasm. Its function is as follows. One of several proteins that assist in the late maturation steps of the functional core of the 30S ribosomal subunit. Helps release RbfA from mature subunits. May play a role in the assembly of ribosomal proteins into the subunit. Circularly permuted GTPase that catalyzes slow GTP hydrolysis, GTPase activity is stimulated by the 30S ribosomal subunit. The protein is Small ribosomal subunit biogenesis GTPase RsgA of Clostridium botulinum (strain Okra / Type B1).